Reading from the N-terminus, the 63-residue chain is Large ribosomal subunit protein uL29 (63 aa).

This sequence belongs to the universal ribosomal protein uL29 family.

This Pseudomonas fluorescens (strain ATCC BAA-477 / NRRL B-23932 / Pf-5) protein is Large ribosomal subunit protein uL29.